A 345-amino-acid chain; its full sequence is 4-hydroxy-2-oxovalerate aldolase (345 aa).

The 253-residue stretch at 8 to 260 (ITVHDMTLRD…ETGVDVFKIQ (253 aa)) folds into the Pyruvate carboxyltransferase domain. 16–17 (RD) serves as a coordination point for substrate. Residue aspartate 17 participates in Mn(2+) binding. The active-site Proton acceptor is histidine 20. 2 residues coordinate substrate: serine 170 and histidine 199. Residues histidine 199 and histidine 201 each contribute to the Mn(2+) site. Tyrosine 290 serves as a coordination point for substrate.

This sequence belongs to the 4-hydroxy-2-oxovalerate aldolase family.

It catalyses the reaction (S)-4-hydroxy-2-oxopentanoate = acetaldehyde + pyruvate. In Leptothrix cholodnii (strain ATCC 51168 / LMG 8142 / SP-6) (Leptothrix discophora (strain SP-6)), this protein is 4-hydroxy-2-oxovalerate aldolase.